The following is a 1898-amino-acid chain: Protein NYNRIN (1898 aa).

5 disordered regions span residues 289–315 (SNNQ…STNH), 424–450 (LPSA…CPRP), 467–533 (DVKD…TDQS), 618–691 (EPTT…TDAG), and 711–731 (VSLL…SGTL). Positions 618-627 (EPTTPKTPQA) are enriched in polar residues. Residues 649–672 (PAATVSKAPAASKAPAAPKVPVTP) are compositionally biased toward low complexity. The RNase NYN domain maps to 792–942 (LRRVVIDGSS…LGRDGPTLDE (151 aa)). The disordered stretch occupies residues 968 to 1019 (SASVTELSDDADSGPLESLPNMEEVREEKEERQDEEQRQGQGTQKAAEEDDL). A compositionally biased stretch (basic and acidic residues) spans 990-1005 (EEVREEKEERQDEEQR). Positions 1304–1450 (LSTFVCIHMS…VDTLAKQGAQ (147 aa)) constitute an RNase H type-1 domain. A run of 2 helical transmembrane segments spans residues 1372–1392 (VVFL…LPLW) and 1408–1428 (PSLL…PFIY). Residues 1609–1774 (RSTAPWSNLQ…ESRLTEPLWW (166 aa)) enclose the Integrase catalytic domain.

The protein localises to the membrane. This Homo sapiens (Human) protein is Protein NYNRIN (NYNRIN).